The sequence spans 352 residues: tRNA-specific 2-thiouridylase MnmA (352 aa).

ATP is bound by residues 6–13 (AMSGGVDS) and Leu32. Cys101 acts as the Nucleophile in catalysis. A disulfide bond links Cys101 and Cys194. Gly125 is a binding site for ATP. The interval 144 to 146 (KDQ) is interaction with tRNA. Cys194 serves as the catalytic Cysteine persulfide intermediate.

It belongs to the MnmA/TRMU family.

It localises to the cytoplasm. It catalyses the reaction S-sulfanyl-L-cysteinyl-[protein] + uridine(34) in tRNA + AH2 + ATP = 2-thiouridine(34) in tRNA + L-cysteinyl-[protein] + A + AMP + diphosphate + H(+). Catalyzes the 2-thiolation of uridine at the wobble position (U34) of tRNA, leading to the formation of s(2)U34. The protein is tRNA-specific 2-thiouridylase MnmA of Frankia alni (strain DSM 45986 / CECT 9034 / ACN14a).